Consider the following 372-residue polypeptide: D-alanine--D-alanine ligase (372 aa).

The ATP-grasp domain maps to 145-349 (KTVLRAGGIP…CPNLLDQLIE (205 aa)). 176-231 (DRWGTSELFVKAVSLGSSVATLPVKTETEFTKAVKEVFRYDDRLMVEPRIRGREIE) is a binding site for ATP. Mg(2+)-binding residues include Asp303, Glu316, and Asn318.

This sequence belongs to the D-alanine--D-alanine ligase family. Mg(2+) serves as cofactor. It depends on Mn(2+) as a cofactor.

It is found in the cytoplasm. It catalyses the reaction 2 D-alanine + ATP = D-alanyl-D-alanine + ADP + phosphate + H(+). The protein operates within cell wall biogenesis; peptidoglycan biosynthesis. Cell wall formation. The sequence is that of D-alanine--D-alanine ligase from Coxiella burnetii (strain CbuK_Q154) (Coxiella burnetii (strain Q154)).